Here is a 597-residue protein sequence, read N- to C-terminus: DNA polymerase III subunit gamma/tau (597 aa).

Gly44 to Thr51 contributes to the ATP binding site. Zn(2+) is bound by residues Cys63, Cys72, Cys75, and Cys78.

This sequence belongs to the DnaX/STICHEL family. In terms of assembly, DNA polymerase III contains a core (composed of alpha, epsilon and theta chains) that associates with a tau subunit. This core dimerizes to form the POLIII' complex. PolIII' associates with the gamma complex (composed of gamma, delta, delta', psi and chi chains) and with the beta chain to form the complete DNA polymerase III complex.

It catalyses the reaction DNA(n) + a 2'-deoxyribonucleoside 5'-triphosphate = DNA(n+1) + diphosphate. Functionally, DNA polymerase III is a complex, multichain enzyme responsible for most of the replicative synthesis in bacteria. This DNA polymerase also exhibits 3' to 5' exonuclease activity. This chain is DNA polymerase III subunit gamma/tau (dnaX), found in Mycoplasma genitalium (strain ATCC 33530 / DSM 19775 / NCTC 10195 / G37) (Mycoplasmoides genitalium).